Here is a 181-residue protein sequence, read N- to C-terminus: Adenylate kinase (181 aa).

Position 10-15 (10-15) interacts with ATP; it reads GAGKGT. Residues 30–59 form an NMP region; sequence STGDLFRANIGEGTPLGKEAKSYIDAGKLV. AMP-binding positions include threonine 31, arginine 36, 57–59, 85–88, and glutamine 92; these read KLV and GFPR. The segment at 126-132 is LID; the sequence is ARGRADD. An ATP-binding site is contributed by arginine 127. The AMP site is built by arginine 129 and arginine 140. An ATP-binding site is contributed by glycine 166.

The protein belongs to the adenylate kinase family. Monomer.

Its subcellular location is the cytoplasm. The enzyme catalyses AMP + ATP = 2 ADP. The protein operates within purine metabolism; AMP biosynthesis via salvage pathway; AMP from ADP: step 1/1. Functionally, catalyzes the reversible transfer of the terminal phosphate group between ATP and AMP. Plays an important role in cellular energy homeostasis and in adenine nucleotide metabolism. The sequence is that of Adenylate kinase from Corynebacterium diphtheriae (strain ATCC 700971 / NCTC 13129 / Biotype gravis).